Here is an 861-residue protein sequence, read N- to C-terminus: Leucine--tRNA ligase (861 aa).

The 'HIGH' region signature appears at 42–52 (PYPSGRLHMGH). The 'KMSKS' region signature appears at 619-623 (KMSKS). K622 is an ATP binding site.

The protein belongs to the class-I aminoacyl-tRNA synthetase family.

It is found in the cytoplasm. It carries out the reaction tRNA(Leu) + L-leucine + ATP = L-leucyl-tRNA(Leu) + AMP + diphosphate. The polypeptide is Leucine--tRNA ligase (Haemophilus influenzae (strain ATCC 51907 / DSM 11121 / KW20 / Rd)).